The chain runs to 557 residues: Copine-6 (557 aa).

C2 domains follow at residues 2–127 (SDPE…TKPL) and 134–263 (TAGK…MQWD). Ca(2+) is bound by residues D167, D173, D229, D231, and D237. A linker region region spans residues 244–303 (STFQEMQEGTANPGQEMQWDCINPKYRDKKKNYKSSGTVVLAQCTVEKVHTFLDYIMGGC). In terms of domain architecture, VWFA spans 306 to 526 (SFTVAIDFTA…ALAKRVLAEV (221 aa)).

The protein belongs to the copine family. As to quaternary structure, interacts (via second C2 domain) with OS9 (via C-terminus); this interaction occurs in a calcium-dependent manner in vitro. May interact with NECAB1. It depends on Ca(2+) as a cofactor.

The protein resides in the cytoplasm. It is found in the cell membrane. The protein localises to the endosome. Its subcellular location is the cytoplasmic vesicle. It localises to the clathrin-coated vesicle. The protein resides in the perikaryon. It is found in the cell projection. The protein localises to the dendrite. Functionally, calcium-dependent phospholipid-binding protein that plays a role in calcium-mediated intracellular processes. Binds phospholipid membranes in a calcium-dependent manner. Plays a role in dendrite formation by melanocytes. In Pongo abelii (Sumatran orangutan), this protein is Copine-6.